Here is a 203-residue protein sequence, read N- to C-terminus: Large ribosomal subunit protein uL13 (203 aa).

Position 2 is an N-acetylalanine (A2). R59 is modified (citrulline). Position 77 is a phosphoserine (S77). R140 is subject to Citrulline. Residue K191 is modified to N6-acetyllysine.

The protein belongs to the universal ribosomal protein uL13 family. Component of the 60S ribosome. Component of the GAIT complex. Interacts with EIF4G1. Phosphorylation at Ser-77 upon interferon-gamma treatment in macrophages involves a DAPK1-DAPK3 kinase cascade and is causing release from the ribosome, association with the GAIT complex and subsequent involvement in transcript-selective translation inhibition. In terms of processing, citrullinated by PADI4.

The protein resides in the cytoplasm. Associated with ribosomes but is not required for canonical ribosome function and has extra-ribosomal functions. Component of the GAIT (gamma interferon-activated inhibitor of translation) complex which mediates interferon-gamma-induced transcript-selective translation inhibition in inflammation processes. Upon interferon-gamma activation and subsequent phosphorylation dissociates from the ribosome and assembles into the GAIT complex which binds to stem loop-containing GAIT elements in the 3'-UTR of diverse inflammatory mRNAs (such as ceruplasmin) and suppresses their translation. In the GAIT complex interacts with m7G cap-bound eIF4G at or near the eIF3-binding site and blocks the recruitment of the 43S ribosomal complex. Involved in methylation of rRNA. The protein is Large ribosomal subunit protein uL13 (Rpl13a) of Rattus norvegicus (Rat).